Reading from the N-terminus, the 294-residue chain is MTKAVLTSISQLALKALLYEVSLSPKPGLVDRFDNGAHDDMSFMTFIDSMIALSPFFQAYIETGFAYAKEEQLLLFNRLRQLGQKAEETMFCATQGINTHKGLNFSMALLLGATGAYLARTPHLMTDLGCFSKEDTLAICRLVKPMTAHLIQADLGHLNTKKEFTYGEQLFVTYGIKGPRGEASEGFTTLTDHALPYFRQMISQNDPETSQLRLLVYLMSIVEDGNLIHRGGIEAWKGVKADMRLLLQQDLSTTDLRLALSSYNQCLINQHLSPGGAADLLALTFYFAFLEKLL.

Belongs to the CitG/MdcB family.

It carries out the reaction 3'-dephospho-CoA + ATP = 2'-(5''-triphospho-alpha-D-ribosyl)-3'-dephospho-CoA + adenine. In Streptococcus pyogenes serotype M5 (strain Manfredo), this protein is Probable 2-(5''-triphosphoribosyl)-3'-dephosphocoenzyme-A synthase.